The following is a 140-amino-acid chain: Low calcium response locus protein T (140 aa).

In Yersinia pseudotuberculosis serotype I (strain IP32953), this protein is Low calcium response locus protein T (lcrT).